Reading from the N-terminus, the 525-residue chain is Heat shock factor protein 1 (525 aa).

Residue methionine 1 is modified to N-acetylmethionine. The interval 15 to 120 (VPAFLTKLWT…LLENIKRKVT (106 aa)) is DNA-binding domain. Lysine 80 is modified (N6-acetyllysine). Residue lysine 91 is modified to N6-acetyllysine; alternate. Lysine 91 is covalently cross-linked (Glycyl lysine isopeptide (Lys-Gly) (interchain with G-Cter in SUMO2); alternate). Lysine 118 is subject to N6-acetyllysine. A Phosphoserine; by MAPKAPK2 modification is found at serine 121. Glycyl lysine isopeptide (Lys-Gly) (interchain with G-Cter in SUMO2) cross-links involve residues lysine 126 and lysine 131. Positions 130–203 (IKIRQDSVTR…ISLVQSNRIL (74 aa)) are hydrophobic repeat HR-A/B. Position 142 is a phosphothreonine; by CK2 (threonine 142). Residues lysine 150 and lysine 188 each carry the N6-acetyllysine modification. A d domain region spans residues 203–224 (LGVKRKIPLMLSDSNSAHSVPK). Lysine 208 carries the N6-acetyllysine; alternate modification. A Glycyl lysine isopeptide (Lys-Gly) (interchain with G-Cter in SUMO2); alternate cross-link involves residue lysine 208. Serine 216 bears the Phosphoserine; by PLK1 mark. The segment at 221 to 310 (SVPKYGRQYS…PPSPPHSPRV (90 aa)) is regulatory domain. Lysine 224 participates in a covalent cross-link: Glycyl lysine isopeptide (Lys-Gly) (interchain with G-Cter in SUMO2). Phosphoserine; by CAMK2A is present on serine 230. 2 disordered regions span residues 272–327 (APTS…PLSP) and 340–365 (PTPA…TPST). Phosphoserine is present on residues serine 275 and serine 292. Lysine 298 is modified (N6-acetyllysine; alternate). A Glycyl lysine isopeptide (Lys-Gly) (interchain with G-Cter in SUMO2); alternate cross-link involves residue lysine 298. Lysine 298 participates in a covalent cross-link: Glycyl lysine isopeptide (Lys-Gly) (interchain with G-Cter in SUMO); alternate. Residues serine 303, serine 307, serine 314, and serine 319 each carry the phosphoserine modification. Residue serine 320 is modified to Phosphoserine; by PKA. Threonine 323 is subject to Phosphothreonine. Residue serine 326 is modified to Phosphoserine; by MAPK12. Over residues 343 to 355 (AASNTAPMDTTGA) the composition is skewed to polar residues. At serine 345 the chain carries Phosphoserine. The segment at 367-525 (EKCLSVACLD…PHKAKDPTVS (159 aa)) is transactivation domain. Residues 380-405 (LSDHLDAMDSNLDNLQTMLTSHGFSV) form a hydrophobic repeat HR-C region. The 9aaTAD motif lies at 408 to 416 (SALLDLFSP). Serine 415 bears the Phosphoserine; by PLK1 mark. At serine 440 the chain carries Phosphoserine. Disordered stretches follow at residues 441–460 (PQEP…SGKQ) and 495–525 (YFSE…PTVS). Over residues 515-525 (EPHKAKDPTVS) the composition is skewed to basic and acidic residues. Position 520 is an N6-acetyllysine (lysine 520).

This sequence belongs to the HSF family. As to quaternary structure, monomer; cytoplasmic latent and transcriptionally inactive monomeric form in unstressed cells. Homotrimer; in response to stress, such as heat shock, homotrimerizes and translocates into the nucleus, binds to heat shock element (HSE) sequences in promoter of heat shock protein (HSP) genes and acquires transcriptional ability. Interacts (via monomeric form) with FKBP4; this interaction occurs in unstressed cells. Associates (via monomeric form) with HSP90 proteins in a multichaperone complex in unnstressed cell; this association maintains HSF1 in a non-DNA-binding and transcriptional inactive form by preventing HSF1 homotrimerization. Homotrimeric transactivation activity is modulated by protein-protein interactions and post-translational modifications. Interacts with HSP90AA1; this interaction is decreased in a IER5-dependent manner, promoting HSF1 accumulation in the nucleus, homotrimerization and DNA-binding activities. Part (via regulatory domain in the homotrimeric form) of a large heat shock-induced HSP90-dependent multichaperone complex at least composed of FKBP4, FKBP5, HSP90 proteins, PPID, PPP5C and PTGES3; this association maintains the HSF1 homotrimeric DNA-bound form in a transcriptionally inactive form. Interacts with BAG3 (via BAG domain); this interaction occurs in normal and heat-shocked cells promoting nuclear shuttling of HSF1 in a BAG3-dependent manner. Interacts (via homotrimeric and hyperphosphorylated form) with FKBP4; this interaction occurs upon heat shock in a HSP90-dependent multichaperone complex. Interacts (via homotrimeric form preferentially) with EEF1A proteins. In heat shocked cells, stress-denatured proteins compete with HSF1 homotrimeric DNA-bound form for association of the HSP90-dependent multichaperone complex, and hence alleviating repression of HSF1-mediated transcriptional activity. Interacts (via homotrimeric form preferentially) with DAXX; this interaction relieves homotrimeric HSF1 from repression of its transcriptional activity by HSP90-dependent multichaperone complex upon heat shock. Interacts (via D domain and preferentially with hyperphosphorylated form) with JNK1; this interaction occurs under both normal growth conditions and immediately upon heat shock. Interacts (via D domain and preferentially with hyperphosphorylated form) with MAPK3; this interaction occurs upon heat shock. Interacts with IER5 (via central region); this interaction promotes PPP2CA-induced dephosphorylation on Ser-121, Ser-307, Ser-314 and Thr-323 and HSF1 transactivation activity. Found in a ribonucleoprotein complex composed of the HSF1 homotrimeric form, translation elongation factor eEF1A proteins and non-coding RNA heat shock RNA-1 (HSR1); this complex occurs upon heat shock and stimulates HSF1 DNA-binding activity. Interacts (via transactivation domain) with HSPA1A/HSP70 and DNAJB1; these interactions result in the inhibition of heat shock- and HSF1-induced transcriptional activity during the attenuation and recovery phase from heat shock. Interacts (via Ser-303 and Ser-307 phosphorylated form) with YWHAE; this interaction promotes HSF1 sequestration in the cytoplasm in an ERK-dependent manner. Found in a complex with IER5 and PPP2CA. Interacts with TPR; this interaction increases upon heat shock and stimulates export of HSP70 mRNA. Interacts with SYMPK (via N-terminus) and CSTF2; these interactions occur upon heat shock. Interacts (via transactivation domain) with HSPA8. Interacts with EEF1D; this interaction occurs at heat shock promoter element (HSE) sequences. Interacts with MAPKAPK2. Interacts with PRKACA/PKA. Interacts (via transactivation domain) with GTF2A2. Interacts (via transactivation domain) with GTF2B. Interacts (via transactivation domain) with TBP. Interacts with CDK9, CCNT1 and EP300. Interacts (via N-terminus) with XRCC5 (via N-terminus) and XRCC6 (via N-terminus); these interactions are direct and prevent XRCC5/XRCC6 heterodimeric binding and non-homologous end joining (NHEJ) repair activities induced by ionizing radiation (IR). Interacts with PLK1; this interaction occurs during the early mitotic period, increases upon heat shock but does not modulate neither HSF1 homotrimerization and DNA-binding activities. Interacts (via Ser-216 phosphorylated form) with CDC20; this interaction occurs in mitosis in a MAD2L1-dependent manner and prevents PLK1-stimulated degradation of HSF1 by blocking the recruitment of the SCF(BTRC) ubiquitin ligase complex. Interacts with MAD2L1; this interaction occurs in mitosis. Interacts with BTRC; this interaction occurs during mitosis, induces its ubiquitin-dependent degradation following stimulus-dependent phosphorylation at Ser-216, a process inhibited by CDC20. Interacts with HSP90AA1 and HSP90AB1. Forms a complex with TTC5/STRAP and p300/EP300; these interactions augment chromatin-bound HSF1 and p300/EP300 histone acetyltransferase activity. Phosphorylated. Phosphorylated in unstressed cells; this phosphorylation is constitutive and implicated in the repression of HSF1 transcriptional activity. Phosphorylated on Ser-121 by MAPKAPK2; this phosphorylation promotes interaction with HSP90 proteins and inhibits HSF1 homotrimerization, DNA-binding and transactivation activities. Phosphorylation on Ser-303 by GSK3B/GSK3-beat and on Ser-307 by MAPK3 within the regulatory domain is involved in the repression of HSF1 transcriptional activity and occurs in a RAF1-dependent manner. Phosphorylation on Ser-303 and Ser-307 increases HSF1 nuclear export in a YWHAE- and XPO1/CRM1-dependent manner. Phosphorylation on Ser-307 is a prerequisite for phosphorylation on Ser-303. According to, Ser-303 is not phosphorylated in unstressed cells. Phosphorylated on Ser-415 by PLK1; phosphorylation promotes nuclear translocation upon heat shock. Hyperphosphorylated upon heat shock and during the attenuation and recovery phase period of the heat shock response. Phosphorylated on Thr-142; this phosphorylation increases HSF1 transactivation activity upon heat shock. Phosphorylation on Ser-230 by CAMK2A; this phosphorylation enhances HSF1 transactivation activity upon heat shock. Phosphorylation on Ser-326 by MAPK12; this phosphorylation enhances HSF1 nuclear translocation, homotrimerization and transactivation activities upon heat shock. Phosphorylated on Ser-320 by PRKACA/PKA; this phosphorylation promotes nuclear localization and transcriptional activity upon heat shock. Phosphorylated by MAPK8; this phosphorylation occurs upon heat shock, induces HSF1 translocation into nuclear stress bodies and negatively regulates transactivation activity. Neither basal nor stress-inducible phosphorylation on Ser-230, Ser-292, Ser-303, Ser-307, Ser-314, Ser-319, Ser-320, Thr-323, Ser-326, Ser-338, Ser-345, Ser-364 and Thr-365 within the regulatory domain is involved in the regulation of HSF1 subcellular localization or DNA-binding activity; however, it negatively regulates HSF1 transactivation activity. Phosphorylated on Ser-216 by PLK1 in the early mitotic period; this phosphorylation regulates HSF1 localization to the spindle pole, the recruitment of the SCF(BTRC) ubiquitin ligase complex inducing HSF1 degradation, and hence mitotic progression. Dephosphorylated on Ser-121, Ser-307, Ser-314 and Thr-323 by phosphatase PPP2CA in an IER5-dependent manner, leading to HSF1-mediated transactivation activity. In terms of processing, sumoylated with SUMO1 and SUMO2 upon heat shock in a ERK2-dependent manner. Sumoylated by SUMO1 on Lys-298; sumoylation occurs upon heat shock and promotes its localization to nuclear stress bodies and DNA-binding activity. Phosphorylation on Ser-303 and Ser-307 is probably a prerequisite for sumoylation. Post-translationally, acetylated on Lys-118; this acetylation is decreased in a IER5-dependent manner. Acetylated on Lys-118, Lys-208 and Lys-298; these acetylations occur in a EP300-dependent manner. Acetylated on Lys-80; this acetylation inhibits DNA-binding activity upon heat shock. Deacetylated on Lys-80 by SIRT1; this deacetylation increases DNA-binding activity. Ubiquitinated by SCF(BTRC) and degraded following stimulus-dependent phosphorylation at Ser-216 by PLK1 in mitosis. Polyubiquitinated. Undergoes proteasomal degradation upon heat shock and during the attenuation and recovery phase period of the heat shock response.

The protein localises to the nucleus. It localises to the cytoplasm. Its subcellular location is the nucleoplasm. It is found in the perinuclear region. The protein resides in the cytoskeleton. The protein localises to the spindle pole. It localises to the microtubule organizing center. Its subcellular location is the centrosome. It is found in the chromosome. The protein resides in the centromere. The protein localises to the kinetochore. Functions as a stress-inducible and DNA-binding transcription factor that plays a central role in the transcriptional activation of the heat shock response (HSR), leading to the expression of a large class of molecular chaperones, heat shock proteins (HSPs), that protect cells from cellular insult damage. In unstressed cells, is present in a HSP90-containing multichaperone complex that maintains it in a non-DNA-binding inactivated monomeric form. Upon exposure to heat and other stress stimuli, undergoes homotrimerization and activates HSP gene transcription through binding to site-specific heat shock elements (HSEs) present in the promoter regions of HSP genes. Upon heat shock stress, forms a chromatin-associated complex with TTC5/STRAP and p300/EP300 to stimulate HSR transcription, therefore increasing cell survival. Activation is reversible, and during the attenuation and recovery phase period of the HSR, returns to its unactivated form. Binds to inverted 5'-NGAAN-3' pentamer DNA sequences. Binds to chromatin at heat shock gene promoters. Activates transcription of transcription factor FOXR1 which in turn activates transcription of the heat shock chaperones HSPA1A and HSPA6 and the antioxidant NADPH-dependent reductase DHRS2. Binds the promoter region upstream of exon 1 of Mpv17l to activate expression of the M-LPS isoform which is involved in metabolism of reactive oxygen species. Also serves several other functions independently of its transcriptional activity. Involved in the repression of Ras-induced transcriptional activation of the c-fos gene in heat-stressed cells. Positively regulates pre-mRNA 3'-end processing and polyadenylation of HSP70 mRNA upon heat-stressed cells in a symplekin (SYMPK)-dependent manner. Plays a role in nuclear export of stress-induced HSP70 mRNA. Plays a role in the regulation of mitotic progression. Also plays a role as a negative regulator of non-homologous end joining (NHEJ) repair activity in a DNA damage-dependent manner. Involved in stress-induced cancer cell proliferation in a IER5-dependent manner. This chain is Heat shock factor protein 1, found in Mus musculus (Mouse).